A 204-amino-acid chain; its full sequence is 5'-deoxynucleotidase HDDC2 (204 aa).

An N-acetylalanine modification is found at Ala2. 2 positions are modified to phosphoserine: Ser3 and Ser5. One can recognise an HD domain in the interval 46–148; the sequence is VSDHMYRMAV…VKQLDQCEMI (103 aa). A divalent metal cation is bound by residues His49, His77, Asp78, Glu81, Asp86, Ile87, and Asp143. Residue Ser204 is modified to Phosphoserine.

This sequence belongs to the HDDC2 family. In terms of assembly, homodimer. Mn(2+) is required as a cofactor. It depends on Co(2+) as a cofactor. The cofactor is Mg(2+).

The enzyme catalyses a 2'-deoxyribonucleoside 5'-phosphate + H2O = a 2'-deoxyribonucleoside + phosphate. Its function is as follows. Catalyzes the dephosphorylation of the nucleoside 5'-monophosphates deoxyadenosine monophosphate (dAMP), deoxycytidine monophosphate (dCMP), deoxyguanosine monophosphate (dGMP) and deoxythymidine monophosphate (dTMP). The sequence is that of 5'-deoxynucleotidase HDDC2 (HDDC2) from Homo sapiens (Human).